A 282-amino-acid polypeptide reads, in one-letter code: NADPH-dependent 7-cyano-7-deazaguanine reductase (282 aa).

A substrate-binding site is contributed by 88–90 (IES). An NADPH-binding site is contributed by 90-91 (SK). Cysteine 190 (thioimide intermediate) is an active-site residue. Aspartate 197 serves as the catalytic Proton donor. Residue 229–230 (HE) participates in substrate binding. Residue 258–259 (RG) participates in NADPH binding.

It belongs to the GTP cyclohydrolase I family. QueF type 2 subfamily. In terms of assembly, homodimer.

Its subcellular location is the cytoplasm. It catalyses the reaction 7-aminomethyl-7-carbaguanine + 2 NADP(+) = 7-cyano-7-deazaguanine + 2 NADPH + 3 H(+). Its pathway is tRNA modification; tRNA-queuosine biosynthesis. Its function is as follows. Catalyzes the NADPH-dependent reduction of 7-cyano-7-deazaguanine (preQ0) to 7-aminomethyl-7-deazaguanine (preQ1). The polypeptide is NADPH-dependent 7-cyano-7-deazaguanine reductase (Salmonella arizonae (strain ATCC BAA-731 / CDC346-86 / RSK2980)).